A 479-amino-acid chain; its full sequence is GTPase Obg (479 aa).

The 158-residue stretch at 2–159 (TTFVDRVELH…QDIVLELKTV (158 aa)) folds into the Obg domain. Positions 61 to 87 (HHKPHRSATNGKPGEGGNRSGKDGQDL) are disordered. An OBG-type G domain is found at 160–331 (ADVALVGYPS…LSFALAELVG (172 aa)). GTP-binding positions include 166-173 (GYPSAGKS), 191-195 (FTTLV), 212-215 (DVPG), 283-286 (NKID), and 312-314 (SAV). Mg(2+) contacts are provided by serine 173 and threonine 193. Residues 349 to 431 (PKAVDDAGFT…DNAVVFDWEP (83 aa)) form the OCT domain. The segment covering 440-453 (LGRRGEDHRLDEPR) has biased composition (basic and acidic residues). Residues 440–479 (LGRRGEDHRLDEPRPAAQRRRDKQAERDDAEKEYDDFEPF) are disordered. A compositionally biased stretch (acidic residues) spans 470–479 (EKEYDDFEPF).

This sequence belongs to the TRAFAC class OBG-HflX-like GTPase superfamily. OBG GTPase family. Monomer. It depends on Mg(2+) as a cofactor.

It is found in the cytoplasm. Its function is as follows. An essential GTPase which binds GTP, GDP and possibly (p)ppGpp with moderate affinity, with high nucleotide exchange rates and a fairly low GTP hydrolysis rate. Plays a role in control of the cell cycle, stress response, ribosome biogenesis and in those bacteria that undergo differentiation, in morphogenesis control. The chain is GTPase Obg from Streptomyces avermitilis (strain ATCC 31267 / DSM 46492 / JCM 5070 / NBRC 14893 / NCIMB 12804 / NRRL 8165 / MA-4680).